The chain runs to 56 residues: Large ribosomal subunit protein bL32B (56 aa).

Basic residues predominate over residues 1-19 (MAVPKRRMSRSNTRHRRAQ). Residues 1 to 22 (MAVPKRRMSRSNTRHRRAQWKA) are disordered.

The protein belongs to the bacterial ribosomal protein bL32 family.

In Streptomyces coelicolor (strain ATCC BAA-471 / A3(2) / M145), this protein is Large ribosomal subunit protein bL32B (rpmF2).